Consider the following 409-residue polypeptide: NADH-quinone oxidoreductase subunit D (409 aa).

It belongs to the complex I 49 kDa subunit family. As to quaternary structure, NDH-1 is composed of 14 different subunits. Subunits NuoB, C, D, E, F, and G constitute the peripheral sector of the complex.

It localises to the cell inner membrane. The catalysed reaction is a quinone + NADH + 5 H(+)(in) = a quinol + NAD(+) + 4 H(+)(out). In terms of biological role, NDH-1 shuttles electrons from NADH, via FMN and iron-sulfur (Fe-S) centers, to quinones in the respiratory chain. The immediate electron acceptor for the enzyme in this species is believed to be ubiquinone. Couples the redox reaction to proton translocation (for every two electrons transferred, four hydrogen ions are translocated across the cytoplasmic membrane), and thus conserves the redox energy in a proton gradient. The protein is NADH-quinone oxidoreductase subunit D of Helicobacter acinonychis (strain Sheeba).